The primary structure comprises 251 residues: Transmembrane ascorbate-dependent reductase CYB561 (251 aa).

An N-acetylmethionine modification is found at Met1. The Cytoplasmic portion of the chain corresponds to 1-16 (MEGGAAAATPTALPYY). The helical transmembrane segment at 17 to 37 (VAFSQLLGLTLVAMTGAWLGL) threads the bilayer. The Cytochrome b561 domain occupies 19-220 (FSQLLGLTLV…FGGAVLYILT (202 aa)). The Vesicular portion of the chain corresponds to 38 to 51 (YRGGIAWESDLQFN). Residues 52 to 72 (AHPLCMVIGLIFLQGNALLVY) form a helical membrane-spanning segment. Residues His53, Arg73, and Lys80 each contribute to the heme b site. Over 73–85 (RVFRNEAKRTTKV) the chain is Cytoplasmic. L-ascorbate-binding residues include Lys80 and Lys84. Residues 86–106 (LHGLLHIFALVIALVGLVAVF) form a helical membrane-spanning segment. Residues His87, 116–119 (DLYS), and His121 contribute to the heme b site. Residues 107–124 (DYHRKKGYADLYSLHSWC) are Vesicular-facing. A helical transmembrane segment spans residues 125–145 (GILVFVLYFVQWLVGFSFFLF). The Cytoplasmic segment spans residues 146–158 (PGASFSLRSRYRP). Arg153 is a binding site for L-ascorbate. The chain crosses the membrane as a helical span at residues 159-179 (QHIFFGATIFLLSVGTALLGL). Heme b contacts are provided by His160 and Glu181. Residues 180-198 (KEALLFNLGGKYSAFEPEG) are Vesicular-facing. Residues 199–219 (VLANVLGLLLACFGGAVLYIL) traverse the membrane as a helical segment. At 220–251 (TRADWKRPSQAEEQALSMDFKTLTEGDSPGSQ) the chain is on the cytoplasmic side. Residue Lys225 coordinates heme b. Ser247 bears the Phosphoserine mark.

The cofactor is heme b. As to expression, expressed in many tissues, in particular the brain especially in the cortex and hippocampus.

Its subcellular location is the cytoplasmic vesicle. The protein resides in the secretory vesicle. It is found in the chromaffin granule membrane. It catalyses the reaction monodehydro-L-ascorbate radical(out) + L-ascorbate(in) = monodehydro-L-ascorbate radical(in) + L-ascorbate(out). In terms of biological role, transmembrane reductase that uses ascorbate as an electron donor in the cytoplasm and transfers electrons across membranes to reduce monodehydro-L-ascorbate radical in the lumen of secretory vesicles. It is therefore involved the regeneration and homeostasis within secretory vesicles of ascorbate which in turn provides reducing equivalents needed to support the activity of intravesicular enzymes. This is Transmembrane ascorbate-dependent reductase CYB561 from Homo sapiens (Human).